The primary structure comprises 363 residues: HAUS augmin-like complex subunit 4 (363 aa).

The protein belongs to the HAUS4 family. In terms of assembly, component of the HAUS augmin-like complex. The complex interacts with the gamma-tubulin ring complex and this interaction is required for spindle assembly. Interacts with EML3 (phosphorylated at 'Thr-881').

The protein localises to the cytoplasm. Its subcellular location is the cytoskeleton. The protein resides in the microtubule organizing center. It localises to the centrosome. It is found in the spindle. Contributes to mitotic spindle assembly, maintenance of centrosome integrity and completion of cytokinesis as part of the HAUS augmin-like complex. In Homo sapiens (Human), this protein is HAUS augmin-like complex subunit 4 (HAUS4).